We begin with the raw amino-acid sequence, 462 residues long: tRNA modification GTPase MnmE (462 aa).

(6S)-5-formyl-5,6,7,8-tetrahydrofolate-binding residues include Arg27, Glu89, and Arg128. The region spanning 224-383 (GLATAIVGRP…LDERIAKLFF (160 aa)) is the TrmE-type G domain. Residue Asn234 participates in K(+) binding. GTP contacts are provided by residues 234–239 (NVGKSS), 253–259 (TDVAGTT), and 278–281 (DTAG). Mg(2+) is bound at residue Ser238. K(+)-binding residues include Thr253, Val255, and Thr258. Thr259 contributes to the Mg(2+) binding site. Position 462 (Lys462) interacts with (6S)-5-formyl-5,6,7,8-tetrahydrofolate.

This sequence belongs to the TRAFAC class TrmE-Era-EngA-EngB-Septin-like GTPase superfamily. TrmE GTPase family. Homodimer. Heterotetramer of two MnmE and two MnmG subunits. Requires K(+) as cofactor.

It localises to the cytoplasm. In terms of biological role, exhibits a very high intrinsic GTPase hydrolysis rate. Involved in the addition of a carboxymethylaminomethyl (cmnm) group at the wobble position (U34) of certain tRNAs, forming tRNA-cmnm(5)s(2)U34. The chain is tRNA modification GTPase MnmE from Lacticaseibacillus paracasei (strain ATCC 334 / BCRC 17002 / CCUG 31169 / CIP 107868 / KCTC 3260 / NRRL B-441) (Lactobacillus paracasei).